A 341-amino-acid chain; its full sequence is Phenylalanine--tRNA ligase alpha subunit (341 aa).

Glu252 is a Mg(2+) binding site.

This sequence belongs to the class-II aminoacyl-tRNA synthetase family. Phe-tRNA synthetase alpha subunit type 1 subfamily. As to quaternary structure, tetramer of two alpha and two beta subunits. The cofactor is Mg(2+).

Its subcellular location is the cytoplasm. The enzyme catalyses tRNA(Phe) + L-phenylalanine + ATP = L-phenylalanyl-tRNA(Phe) + AMP + diphosphate + H(+). The protein is Phenylalanine--tRNA ligase alpha subunit of Malacoplasma penetrans (strain HF-2) (Mycoplasma penetrans).